Reading from the N-terminus, the 535-residue chain is Sodium/hydrogen exchanger 1 (535 aa).

The Cytoplasmic portion of the chain corresponds to 1-21 (MGMEVAAARLGALYTTSDYAS). Residues 22-42 (VVSINLFVALLCACIVLGHLL) form a helical membrane-spanning segment. The Vacuolar portion of the chain corresponds to 43–46 (EENR). The chain crosses the membrane as a helical span at residues 47 to 67 (WVNESITALIIGLCTGVVILL). Residues 68 to 75 (MTKGKSSH) are Cytoplasmic-facing. A helical transmembrane segment spans residues 76 to 96 (LFVFSEDLFFIYLLPPIIFNA). Residues 97 to 114 (GFQVKKKQFFRNFMTITL) lie on the Vacuolar side of the membrane. A helical membrane pass occupies residues 115–135 (FGAVGTMISFFTISIAAIAIF). Topologically, residues 136–137 (SR) are cytoplasmic. The helical transmembrane segment at 138–158 (MNIGTLDVGDFLAIGAIFSAT) threads the bilayer. Topologically, residues 159–173 (DSVCTLQVLNQDETP) are vacuolar. A helical transmembrane segment spans residues 174–194 (FLYSLVFGEGVVNDATSIVLF). Residues 195–218 (NALQNFDLVHIDAAVVLKFLGNFF) lie on the Cytoplasmic side of the membrane. The helical transmembrane segment at 219–239 (YLFLSSTFLGVFAGLLSAYII) threads the bilayer. The Vacuolar portion of the chain corresponds to 240 to 264 (KKLYIGRHSTDREVALMMLMAYLSY). The chain crosses the membrane as a helical span at residues 265–285 (MLAELLDLSGILTVFFCGIVM). Residues 286–304 (SHYTWHNVTESSRVTTKHA) lie on the Cytoplasmic side of the membrane. The helical transmembrane segment at 305 to 325 (FATLSFIAETFLFLYVGMDAL) threads the bilayer. Residues 326 to 344 (DIEKWEFASDRPGKSIGIS) lie on the Vacuolar side of the membrane. The chain crosses the membrane as a helical span at residues 345–365 (SILLGLVLIGRAAFVFPLSFL). The Cytoplasmic portion of the chain corresponds to 366-381 (SNLTKKAPNEKITWRQ). The chain crosses the membrane as a helical span at residues 382–402 (QVVIWWAGLMRGAVSIALAYN). The Vacuolar segment spans residues 403–415 (KFTRSGHTQLHGN). A helical membrane pass occupies residues 416–436 (AIMITSTITVVLFSTMVFGMM). Residues 437–535 (TKPLIRLLLP…SPTEQSHGGR (99 aa)) are Cytoplasmic-facing. Residues 452–478 (VTSEPSSPKSLHSPLLTSMQGSDLEST) are disordered. Over residues 454–469 (SEPSSPKSLHSPLLTS) the composition is skewed to low complexity.

Belongs to the monovalent cation:proton antiporter 1 (CPA1) transporter (TC 2.A.36) family.

The protein localises to the vacuole membrane. The enzyme catalyses Na(+)(in) + H(+)(out) = Na(+)(out) + H(+)(in). The catalysed reaction is K(+)(in) + H(+)(out) = K(+)(out) + H(+)(in). Its function is as follows. Vacuolar antiporter that acts in low affinity electroneutral exchange of protons H(+) for cations such as Na(+) or K(+) across membranes. Plays important roles in the transport of Na(+) and K(+) accumulated in the cytoplasm into vacuoles, and is involved in salt stress tolerance. This Oryza sativa subsp. japonica (Rice) protein is Sodium/hydrogen exchanger 1.